A 433-amino-acid chain; its full sequence is MASPVAIAAQAGKLLRERALRPLLAVRSQAGHLTPRRWLNLQEYQSKKLMSEHGVRVQRFFVANTAKEALEAAKRLNAKEIVLKAQILAGGRGKGVFNSGLKGGVHLTKDPKVVGELAQQMIGYNLATKQTPKEGVKVNKVMVAEALDISRETYLAILMDRSHNGPVIVGSPQGGVDIEEVAASSPELIFKEQIDIFEGIKDSQAQRMAENLGFLGSLKNQAADQITKLYHLFLKIDATQVEVNPFGETPEGQVVCFDAKINFDDNAEFRQKDIFAMDDKSENEPIENEAARYDLKYIGLDGNIACFVNGAGLAMATCDIIFLNGGKPANFLDLGGGVKEAQVYEAFKLLTSDPKVEAILVNIFGGIVNCAIIANGITKACRELELKVPLVVRLEGTNVQEAQNILKSSGLPITSAVDLEDAAKKAVASVAKK.

The N-terminal 38 residues, 1–38 (MASPVAIAAQAGKLLRERALRPLLAVRSQAGHLTPRRW), are a transit peptide targeting the mitochondrion. The 229-residue stretch at 47 to 275 (KKLMSEHGVR…NAEFRQKDIF (229 aa)) folds into the ATP-grasp domain. Gln-58 lines the GTP pocket. Position 67 is an N6-acetyllysine; alternate (Lys-67). Lys-67 is subject to N6-succinyllysine; alternate. N6-acetyllysine is present on Lys-74. Lys-79 carries the N6-succinyllysine modification. 91 to 93 (GRG) provides a ligand contact to GTP. Residues Lys-112, Lys-133, and Lys-140 each carry the N6-acetyllysine modification. Position 147 (Leu-147) interacts with GTP. Residue Ser-162 is modified to Phosphoserine. The residue at position 201 (Lys-201) is an N6-acetyllysine. Position 217 is a phosphoserine (Ser-217). 2 positions are modified to N6-acetyllysine: Lys-219 and Lys-228. Mg(2+) contacts are provided by Asn-244 and Asp-258. Position 272 is an N6-acetyllysine (Lys-272). Asn-309 is a substrate binding site. Lys-339 is subject to N6-succinyllysine. At Lys-348 the chain carries N6-acetyllysine. 366–368 (GIV) provides a ligand contact to substrate. Residues Lys-387, Lys-407, and Lys-424 each carry the N6-acetyllysine modification.

This sequence belongs to the succinate/malate CoA ligase beta subunit family. GTP-specific subunit beta subfamily. Heterodimer of an alpha and a beta subunit. The beta subunit determines specificity for GTP. Mg(2+) is required as a cofactor.

It localises to the mitochondrion. The catalysed reaction is GTP + succinate + CoA = succinyl-CoA + GDP + phosphate. Its pathway is carbohydrate metabolism; tricarboxylic acid cycle; succinate from succinyl-CoA (ligase route): step 1/1. Its function is as follows. GTP-specific succinyl-CoA synthetase functions in the citric acid cycle (TCA), coupling the hydrolysis of succinyl-CoA to the synthesis of GTP and thus represents the only step of substrate-level phosphorylation in the TCA. The beta subunit provides nucleotide specificity of the enzyme and binds the substrate succinate, while the binding sites for coenzyme A and phosphate are found in the alpha subunit. This chain is Succinate--CoA ligase [GDP-forming] subunit beta, mitochondrial, found in Mus musculus (Mouse).